The primary structure comprises 251 residues: Triosephosphate isomerase (251 aa).

9–11 (NWK) contributes to the substrate binding site. The active-site Electrophile is H94. The active-site Proton acceptor is the E166. Residues G172, S211, and 232-233 (GG) contribute to the substrate site.

Belongs to the triosephosphate isomerase family. In terms of assembly, homodimer.

The protein resides in the cytoplasm. It carries out the reaction D-glyceraldehyde 3-phosphate = dihydroxyacetone phosphate. It participates in carbohydrate biosynthesis; gluconeogenesis. Its pathway is carbohydrate degradation; glycolysis; D-glyceraldehyde 3-phosphate from glycerone phosphate: step 1/1. Involved in the gluconeogenesis. Catalyzes stereospecifically the conversion of dihydroxyacetone phosphate (DHAP) to D-glyceraldehyde-3-phosphate (G3P). The polypeptide is Triosephosphate isomerase (Xanthomonas oryzae pv. oryzae (strain MAFF 311018)).